Reading from the N-terminus, the 706-residue chain is Amino-acid acetyltransferase, mitochondrial (706 aa).

Disordered regions lie at residues 1–25 (MSSRVLASRAAQPLKRHPTVVGAGD) and 367–403 (NPANNSQGESVVTNPISDSNAVSESASTEPTSTPAKQ). The N-terminal 35 residues, 1 to 35 (MSSRVLASRAAQPLKRHPTVVGAGDEAYPTPRRCF), are a transit peptide targeting the mitochondrion. Positions 367 to 388 (NPANNSQGESVVTNPISDSNAV) are enriched in polar residues. Over residues 389-401 (SESASTEPTSTPA) the composition is skewed to low complexity. Residues 527-696 (TRPNMNLDDP…YEAVCRSIQP (170 aa)) form the N-acetyltransferase domain.

The protein belongs to the acetyltransferase family.

The protein localises to the mitochondrion. It carries out the reaction L-glutamate + acetyl-CoA = N-acetyl-L-glutamate + CoA + H(+). It functions in the pathway amino-acid biosynthesis; L-arginine biosynthesis; N(2)-acetyl-L-ornithine from L-glutamate: step 1/4. N-acetylglutamate synthase involved in arginine biosynthesis. This is Amino-acid acetyltransferase, mitochondrial (arg2) from Emericella nidulans (strain FGSC A4 / ATCC 38163 / CBS 112.46 / NRRL 194 / M139) (Aspergillus nidulans).